The sequence spans 93 residues: Stromal cell-derived factor 1 (93 aa).

An N-terminal signal peptide occupies residues methionine 1 to glycine 21. A Receptor activation motif motif is present at residues lysine 22 to proline 23. Positions arginine 29 to arginine 33 are receptor and heparin binding. Intrachain disulfides connect cysteine 30–cysteine 55 and cysteine 32–cysteine 71. Heparin contacts are provided by residues lysine 41–serine 51, arginine 62, glutamine 69, and lysine 85. Receptor binding regions lie at residues lysine 48–leucine 50 and valine 60–lysine 64.

Belongs to the intercrine alpha (chemokine CxC) family. In terms of assembly, monomer or homodimer; in equilibrium. Dimer formation is induced by non acidic pH and the presence of multivalent anions, and by binding to cxcr4 or heparin.

Its subcellular location is the secreted. In terms of biological role, chemoattractant. Activates the C-X-C chemokine receptor cxcr4 to induce a rapid and transient rise in the level of intracellular calcium ions, and chemotaxis. Signaling with cxcr4 mediates the directional movement of mesodermal cells during gastrulation. Binds to the allosteric site (site 2) of integrins and activates them in a cxcr4-independent manner. This chain is Stromal cell-derived factor 1, found in Xenopus tropicalis (Western clawed frog).